The chain runs to 688 residues: Glycine--tRNA ligase beta subunit (688 aa).

The protein belongs to the class-II aminoacyl-tRNA synthetase family. As to quaternary structure, tetramer of two alpha and two beta subunits.

It is found in the cytoplasm. The enzyme catalyses tRNA(Gly) + glycine + ATP = glycyl-tRNA(Gly) + AMP + diphosphate. This is Glycine--tRNA ligase beta subunit from Geotalea uraniireducens (strain Rf4) (Geobacter uraniireducens).